Consider the following 263-residue polypeptide: Tryptophan synthase alpha chain (263 aa).

Active-site proton acceptor residues include Glu51 and Asp62.

This sequence belongs to the TrpA family. In terms of assembly, tetramer of two alpha and two beta chains.

It catalyses the reaction (1S,2R)-1-C-(indol-3-yl)glycerol 3-phosphate + L-serine = D-glyceraldehyde 3-phosphate + L-tryptophan + H2O. The protein operates within amino-acid biosynthesis; L-tryptophan biosynthesis; L-tryptophan from chorismate: step 5/5. In terms of biological role, the alpha subunit is responsible for the aldol cleavage of indoleglycerol phosphate to indole and glyceraldehyde 3-phosphate. This chain is Tryptophan synthase alpha chain, found in Methanosarcina barkeri (strain Fusaro / DSM 804).